The primary structure comprises 197 residues: UDP-N-acetylglucosamine transferase subunit ALG13 (197 aa).

The protein belongs to the glycosyltransferase 28 family. Heterodimer with ALG14 to form a functional enzyme.

The protein localises to the endoplasmic reticulum. It catalyses the reaction an N-acetyl-alpha-D-glucosaminyl-diphospho-di-trans,poly-cis-dolichol + UDP-N-acetyl-alpha-D-glucosamine = an N,N'-diacetylchitobiosyl-diphospho-di-trans,poly-cis-dolichol + UDP + H(+). Its function is as follows. Involved in protein N-glycosylation. Essential for the second step of the dolichol-linked oligosaccharide pathway. The polypeptide is UDP-N-acetylglucosamine transferase subunit ALG13 (ALG13) (Kluyveromyces lactis (strain ATCC 8585 / CBS 2359 / DSM 70799 / NBRC 1267 / NRRL Y-1140 / WM37) (Yeast)).